Consider the following 222-residue polypeptide: Glutathione S-transferase A3 (222 aa).

Ala-2 is modified (N-acetylalanine). Positions 3-83 constitute a GST N-terminal domain; that stretch reads GKPKLHYFNG…YIASKYNLYG (81 aa). Lys-4 carries the N6-succinyllysine modification. Glutathione-binding positions include Tyr-9, Arg-45, 54 to 55, and 67 to 68; these read QV and QT. A GST C-terminal domain is found at 85 to 207; sequence DIKERALIDM…LQPGSPRKPP (123 aa).

Belongs to the GST superfamily. Alpha family. Homodimer.

The protein localises to the cytoplasm. It catalyses the reaction RX + glutathione = an S-substituted glutathione + a halide anion + H(+). The catalysed reaction is androst-5-ene-3,17-dione = androst-4-ene-3,17-dione. The enzyme catalyses pregn-5-ene-3,20-dione = progesterone. In terms of biological role, conjugation of reduced glutathione to a wide number of exogenous and endogenous hydrophobic electrophiles. Catalyzes isomerization reactions that contribute to the biosynthesis of steroid hormones. Efficiently catalyze obligatory double-bond isomerizations of delta(5)-androstene-3,17-dione and delta(5)-pregnene-3,20-dione, precursors to testosterone and progesterone, respectively. Has substantial activity toward aflatoxin B1-8,9-epoxide. The sequence is that of Glutathione S-transferase A3 from Homo sapiens (Human).